A 255-amino-acid chain; its full sequence is Small ribosomal subunit protein eS1B (255 aa).

Ala-2 carries the post-translational modification N-acetylalanine; partial. At Ser-245 the chain carries Phosphoserine. Lys-248 is covalently cross-linked (Glycyl lysine isopeptide (Lys-Gly) (interchain with G-Cter in ubiquitin)). Thr-254 bears the Phosphothreonine mark.

It belongs to the eukaryotic ribosomal protein eS1 family. As to quaternary structure, component of the small ribosomal subunit. Mature ribosomes consist of a small (40S) and a large (60S) subunit. The 40S subunit contains about 33 different proteins and 1 molecule of RNA (18S). The 60S subunit contains about 49 different proteins and 3 molecules of RNA (25S, 5.8S and 5S).

The protein resides in the cytoplasm. This chain is Small ribosomal subunit protein eS1B, found in Saccharomyces cerevisiae (strain RM11-1a) (Baker's yeast).